The primary structure comprises 492 residues: MSNRQSIDDMNLSVKNKKSKSIFSCRPVKYVCLSVAVAAVGYANYMNNGDRNSLSCVDLNNVYSRNLSESQENHNSSFTRTNLVENENEEDDIFGVHRDESFAETVLNGQDIISYLEHQNTKIHEDNIHDDISHTLLNEGDVQNYYDVLNVNEHSDLNELKRNFHNLSLQHYPKITSDNSFELNDEFNQLSEAYQVLSYQIRKNIYDNEGVYGTKKMAIVNPLIYFNGIFTTQLMHEYIGTTEVAQFVQLFLERNIAPENIVSFLEESVSDMMKGQDYRELQLTELLKQKLDLYINDDEKWQNIIKSEINVLTKSPFSKFILEAVGWTYENVGNIYMEQTDNFDNVYHGIYVNLADERINRNYAILDENVNDFVSLLKKFYPFTETVNPYLRRAKHNLNNLQGGINNLYSSVNVVYDNLFNENINISSNEHYHLLQELLKIILNINLCDIEETIRECAYNVLKDKTVDASVHSKRAHRMNILGSLMLESSNE.

Residues 30–46 form a helical membrane-spanning segment; it reads YVCLSVAVAAVGYANYM. The J domain maps to 144–210; it reads NYYDVLNVNE…IRKNIYDNEG (67 aa).

It localises to the membrane. This is an uncharacterized protein from Plasmodium falciparum (isolate 3D7).